The primary structure comprises 157 residues: 2-C-methyl-D-erythritol 2,4-cyclodiphosphate synthase (157 aa).

A divalent metal cation contacts are provided by D8 and H10. Residues 8-10 (DVH) and 34-35 (HS) contribute to the 4-CDP-2-C-methyl-D-erythritol 2-phosphate site. H42 is a binding site for a divalent metal cation. 4-CDP-2-C-methyl-D-erythritol 2-phosphate-binding positions include 56–58 (DIG), 61–65 (FPDTD), 100–106 (AQAPKMA), 132–135 (TTTE), F139, and R142.

It belongs to the IspF family. In terms of assembly, homotrimer. The cofactor is a divalent metal cation.

It catalyses the reaction 4-CDP-2-C-methyl-D-erythritol 2-phosphate = 2-C-methyl-D-erythritol 2,4-cyclic diphosphate + CMP. It functions in the pathway isoprenoid biosynthesis; isopentenyl diphosphate biosynthesis via DXP pathway; isopentenyl diphosphate from 1-deoxy-D-xylulose 5-phosphate: step 4/6. Its function is as follows. Involved in the biosynthesis of isopentenyl diphosphate (IPP) and dimethylallyl diphosphate (DMAPP), two major building blocks of isoprenoid compounds. Catalyzes the conversion of 4-diphosphocytidyl-2-C-methyl-D-erythritol 2-phosphate (CDP-ME2P) to 2-C-methyl-D-erythritol 2,4-cyclodiphosphate (ME-CPP) with a corresponding release of cytidine 5-monophosphate (CMP). The chain is 2-C-methyl-D-erythritol 2,4-cyclodiphosphate synthase from Pseudomonas aeruginosa (strain UCBPP-PA14).